The chain runs to 813 residues: Leucine--tRNA ligase (813 aa).

Positions 40–51 (SYPSGSKLHAGH) match the 'HIGH' region motif. Positions 572-576 (KMSKS) match the 'KMSKS' region motif. Residue K575 coordinates ATP.

Belongs to the class-I aminoacyl-tRNA synthetase family.

The protein localises to the cytoplasm. It catalyses the reaction tRNA(Leu) + L-leucine + ATP = L-leucyl-tRNA(Leu) + AMP + diphosphate. In Clostridium botulinum (strain Langeland / NCTC 10281 / Type F), this protein is Leucine--tRNA ligase.